The chain runs to 253 residues: Chitooligosaccharide deacetylase (253 aa).

Mg(2+)-binding residues include His61 and His126.

It belongs to the YdjC deacetylase family. ChbG subfamily. As to quaternary structure, homodimer. Mg(2+) serves as cofactor.

The protein localises to the cytoplasm. The enzyme catalyses N,N'-diacetylchitobiose + H2O = N-acetyl-beta-D-glucosaminyl-(1-&gt;4)-D-glucosamine + acetate. The catalysed reaction is diacetylchitobiose-6'-phosphate + H2O = N'-monoacetylchitobiose-6'-phosphate + acetate. The protein operates within glycan degradation; chitin degradation. In terms of biological role, involved in the degradation of chitin. ChbG is essential for growth on the acetylated chitooligosaccharides chitobiose and chitotriose but is dispensable for growth on cellobiose and chitosan dimer, the deacetylated form of chitobiose. Deacetylation of chitobiose-6-P and chitotriose-6-P is necessary for both the activation of the chb promoter by the regulatory protein ChbR and the hydrolysis of phosphorylated beta-glucosides by the phospho-beta-glucosidase ChbF. Catalyzes the removal of only one acetyl group from chitobiose-6-P to yield monoacetylchitobiose-6-P, the inducer of ChbR and the substrate of ChbF. The protein is Chitooligosaccharide deacetylase of Yersinia enterocolitica serotype O:8 / biotype 1B (strain NCTC 13174 / 8081).